The chain runs to 362 residues: C-C chemokine receptor type 10 (362 aa).

Topologically, residues 1–48 are extracellular; that stretch reads MGTKPTEQVSWGLYSGYDEEAYSVGPLPELCYKADVQAFSRAFQPSVS. Residues 49 to 69 traverse the membrane as a helical segment; the sequence is LMVAVLGLAGNGLVLATHLAA. Topologically, residues 70-80 are cytoplasmic; sequence RRTTRSPTSVH. Residues 81 to 101 form a helical membrane-spanning segment; sequence LLQLALADLLLALTLPFAAAG. Topologically, residues 102 to 115 are extracellular; it reads ALQGWNLGSTTCRA. A disulfide bridge connects residues Cys113 and Cys191. The chain crosses the membrane as a helical span at residues 116–136; sequence ISGLYSASFHAGFLFLACISA. Residues 137–159 lie on the Cytoplasmic side of the membrane; sequence DRYVAIARALPAGQRPSTPSRAH. Residues 160–180 traverse the membrane as a helical segment; that stretch reads LVSVFVWLLSLFLALPALLFS. At 181–208 the chain is on the extracellular side; it reads RDGPREGQRRCRLIFPESLTQTVKGASA. Residues 209-229 form a helical membrane-spanning segment; sequence VAQVVLGFALPLGVMAACYAL. Residues 230-247 lie on the Cytoplasmic side of the membrane; it reads LGRTLLAARGPERRRALR. Residues 248–268 traverse the membrane as a helical segment; sequence VVVALVVAFVVLQLPYSLALL. Over 269-291 the chain is Extracellular; that stretch reads LDTADLLAARERSCSSSKRKDLA. A helical transmembrane segment spans residues 292–312; the sequence is LLVTGGLTLVRCSLNPVLYAF. The Cytoplasmic portion of the chain corresponds to 313–362; the sequence is LGLRFRRDLRRLLQGGGCSPKPNPRGRCPRRLRLSSCSAPTETHSLSWDN.

The protein belongs to the G-protein coupled receptor 1 family. Expressed at high levels in small intestine, colon, lymph nodes, Peyer patches and at lower levels in thymus, lung and spleen.

Its subcellular location is the cell membrane. Its function is as follows. Receptor for chemokines SCYA27 and SCYA28. Subsequently transduces a signal by increasing the intracellular calcium ions level. The chain is C-C chemokine receptor type 10 (Ccr10) from Mus musculus (Mouse).